The primary structure comprises 30 residues: Bacteriocin SRCAM 37 (30 aa).

This sequence belongs to the bacteriocin class IIA/YGNGV family.

Its subcellular location is the secreted. In terms of biological role, bacteriocin with antibacterial activity against C.jejuni. The protein is Bacteriocin SRCAM 37 of Paenibacillus polymyxa (Bacillus polymyxa).